We begin with the raw amino-acid sequence, 278 residues long: HTH-type transcriptional activator RhaS (278 aa).

The HTH araC/xylS-type domain occupies 174–272; sequence NLLLAWLEDH…NWSPRDIRQG (99 aa). 2 DNA-binding regions (H-T-H motif) span residues 191–212 and 239–262; these read DAVA…KQQT and VTDI…RREF.

In terms of assembly, binds DNA as a dimer.

It localises to the cytoplasm. Activates expression of the rhaBAD and rhaT operons. The sequence is that of HTH-type transcriptional activator RhaS from Escherichia coli O81 (strain ED1a).